A 335-amino-acid polypeptide reads, in one-letter code: MNKINAAITAVGAYLPEDVITNDDLEKMVDTNDEWIMTRVGIKERRILRDKNKGASYLAIRAAQDLFERHGIDPKSIDGLILATNSSDYHFPSTASIVAHEIGCGDIFSFDMQAACPTFIYALEVGANFIRSGRYSKILVIATEKMTAFTDYTDRATCPLFGDGAGCVLLEATEEEVGVMDAVLHSNGIGKDHLIMKAGGSACPATHETVDNRWHYVYQEGQVVFKHAVVDMCNSCVEIMERNNLSHDDITWVVPHQANLRIIDAVARRMGVPYEKVMVNIERYGNTSSATIPICLWEWEHKLKKGDVLVMTSFGAGFTWGAVYVKWAYDGSTVR.

Catalysis depends on residues Cys116 and His256. The segment at 257 to 261 (QANLR) is ACP-binding. Residue Asn286 is part of the active site.

It belongs to the thiolase-like superfamily. FabH family. In terms of assembly, homodimer.

It is found in the cytoplasm. It carries out the reaction malonyl-[ACP] + acetyl-CoA + H(+) = 3-oxobutanoyl-[ACP] + CO2 + CoA. Its pathway is lipid metabolism; fatty acid biosynthesis. Catalyzes the condensation reaction of fatty acid synthesis by the addition to an acyl acceptor of two carbons from malonyl-ACP. Catalyzes the first condensation reaction which initiates fatty acid synthesis and may therefore play a role in governing the total rate of fatty acid production. Possesses both acetoacetyl-ACP synthase and acetyl transacylase activities. Its substrate specificity determines the biosynthesis of branched-chain and/or straight-chain of fatty acids. The chain is Beta-ketoacyl-[acyl-carrier-protein] synthase III from Porphyromonas gingivalis (strain ATCC BAA-308 / W83).